Consider the following 320-residue polypeptide: Putative thiosulfate sulfurtransferase 2 (320 aa).

2 consecutive Rhodanese domains span residues 18–125 (HAPK…PLSS) and 154–267 (AINV…HACP). C233 acts as the Cysteine persulfide intermediate in catalysis. R238 contacts substrate.

The catalysed reaction is thiosulfate + hydrogen cyanide = thiocyanate + sulfite + 2 H(+). May be a sulfotransferase involved in the formation of thiosulfate. The chain is Putative thiosulfate sulfurtransferase 2 (cysA2) from Mycobacterium bovis (strain ATCC BAA-935 / AF2122/97).